Reading from the N-terminus, the 573-residue chain is Threonine--tRNA ligase (573 aa).

The catalytic stretch occupies residues 174–474 (DHRRINKILE…LLEQTKGALD (301 aa)). Positions 268, 319, and 451 each coordinate Zn(2+).

Belongs to the class-II aminoacyl-tRNA synthetase family. As to quaternary structure, homodimer. The cofactor is Zn(2+).

The protein localises to the cytoplasm. The enzyme catalyses tRNA(Thr) + L-threonine + ATP = L-threonyl-tRNA(Thr) + AMP + diphosphate + H(+). In terms of biological role, catalyzes the attachment of threonine to tRNA(Thr) in a two-step reaction: L-threonine is first activated by ATP to form Thr-AMP and then transferred to the acceptor end of tRNA(Thr). Also edits incorrectly charged L-seryl-tRNA(Thr). In Mycoplasmoides gallisepticum (strain R(low / passage 15 / clone 2)) (Mycoplasma gallisepticum), this protein is Threonine--tRNA ligase.